A 459-amino-acid polypeptide reads, in one-letter code: Argininosuccinate lyase (459 aa).

It belongs to the lyase 1 family. Argininosuccinate lyase subfamily.

It is found in the cytoplasm. The enzyme catalyses 2-(N(omega)-L-arginino)succinate = fumarate + L-arginine. It participates in amino-acid biosynthesis; L-arginine biosynthesis; L-arginine from L-ornithine and carbamoyl phosphate: step 3/3. The chain is Argininosuccinate lyase from Prochlorococcus marinus subsp. pastoris (strain CCMP1986 / NIES-2087 / MED4).